The primary structure comprises 407 residues: Phosphopentomutase (407 aa).

Residues Asp-10, Asp-306, His-311, Asp-347, His-348, and His-359 each contribute to the Mn(2+) site.

This sequence belongs to the phosphopentomutase family. It depends on Mn(2+) as a cofactor.

The protein resides in the cytoplasm. The catalysed reaction is 2-deoxy-alpha-D-ribose 1-phosphate = 2-deoxy-D-ribose 5-phosphate. The enzyme catalyses alpha-D-ribose 1-phosphate = D-ribose 5-phosphate. It participates in carbohydrate degradation; 2-deoxy-D-ribose 1-phosphate degradation; D-glyceraldehyde 3-phosphate and acetaldehyde from 2-deoxy-alpha-D-ribose 1-phosphate: step 1/2. Its function is as follows. Isomerase that catalyzes the conversion of deoxy-ribose 1-phosphate (dRib-1-P) and ribose 1-phosphate (Rib-1-P) to deoxy-ribose 5-phosphate (dRib-5-P) and ribose 5-phosphate (Rib-5-P), respectively. This is Phosphopentomutase from Salmonella schwarzengrund (strain CVM19633).